Consider the following 622-residue polypeptide: Polypeptide N-acetylgalactosaminyltransferase 6 (622 aa).

Topologically, residues 1-8 (MRLLRRRH) are cytoplasmic. A helical; Signal-anchor for type II membrane protein membrane pass occupies residues 9–28 (MAVRLVMVGSAFVLFLFILQ). Residues 29–622 (RDVSGREQAT…SDPHQHWLFI (594 aa)) are Lumenal-facing. N-linked (GlcNAc...) asparagine glycosylation is present at Asn-86. Positions 103-135 (WERPPQDPNGPGADGKAFQKKEWTPQETQEKEE) are disordered. The segment covering 119-135 (AFQKKEWTPQETQEKEE) has biased composition (basic and acidic residues). A catalytic subdomain A region spans residues 176 to 285 (LPATSVIIVF…HGWLEPLLAR (110 aa)). Residues Asp-269, His-271, and His-407 each coordinate Mn(2+). A catalytic subdomain B region spans residues 348–410 (PIKSPTFAGG…PCSVVGHVFR (63 aa)). Asn-476 is a glycosylation site (N-linked (GlcNAc...) asparagine). The Ricin B-type lectin domain maps to 507–622 (DHCLDVGENN…SDPHQHWLFI (116 aa)). A disulfide bond links Cys-509 and Cys-527. UDP-N-acetyl-alpha-D-galactosamine is bound by residues Asp-511, Glu-514, His-528, and Asn-533. Intrachain disulfides connect Cys-553–Cys-566 and Cys-597–Cys-610.

Belongs to the glycosyltransferase 2 family. GalNAc-T subfamily. Requires Mn(2+) as cofactor.

It localises to the golgi apparatus membrane. It catalyses the reaction L-seryl-[protein] + UDP-N-acetyl-alpha-D-galactosamine = a 3-O-[N-acetyl-alpha-D-galactosaminyl]-L-seryl-[protein] + UDP + H(+). It carries out the reaction L-threonyl-[protein] + UDP-N-acetyl-alpha-D-galactosamine = a 3-O-[N-acetyl-alpha-D-galactosaminyl]-L-threonyl-[protein] + UDP + H(+). The protein operates within protein modification; protein glycosylation. In terms of biological role, catalyzes the initial reaction in O-linked oligosaccharide biosynthesis, the transfer of an N-acetyl-D-galactosamine residue to a serine or threonine residue on the protein receptor. May participate in synthesis of oncofetal fibronectin. Has activity toward MUC1A, MUC2, EA2 and fibronectin peptides. The protein is Polypeptide N-acetylgalactosaminyltransferase 6 (GALNT6) of Bos taurus (Bovine).